Reading from the N-terminus, the 338-residue chain is MPQPSRPRKGSMGFSPRKRAESEVPRIRSWASNDGAPGVQGFAGYKAGMTQVLMVNDEANSPREGMEEAVPVTVVETPPMRAVALRAYEDTPYGSKPLTEVWGREFDTSLERTLDLPNEDTFEDDAAALRDDAETGDIDDVRLITHTLPAGMRNIPKKTPDVMETRVGGGTLTDRVEFGLDLISDGGEHEISDIFRAGEYLDAAGVTKGKGTQGPVKRFGVQKRKGKHARQGYRRRIGNLGPWNPSRVRSTVPQQGQTGYHQRTELNKRLIEIGNGDEPTVDGGFVGYGEVDGPYALIKGSLPGPDQRLLRFRTAVRPSDQPRLDPEVRYVSTASNQG.

The disordered stretch occupies residues 1–37; it reads MPQPSRPRKGSMGFSPRKRAESEVPRIRSWASNDGAP.

It belongs to the universal ribosomal protein uL3 family. Part of the 50S ribosomal subunit. Forms a cluster with proteins L14 and L24e.

One of the primary rRNA binding proteins, it binds directly near the 3'-end of the 23S rRNA, where it nucleates assembly of the 50S subunit. In Haloquadratum walsbyi (strain DSM 16790 / HBSQ001), this protein is Large ribosomal subunit protein uL3.